The chain runs to 339 residues: Bifunctional phosphoglucose/phosphomannose isomerase (339 aa).

Residues 22–164 form the SIS domain; that stretch reads ISVNVKAEDI…IEPVDDQIEE (143 aa). Gly41, Ser42, Ser83, Ser85, Thr88, and Arg135 together coordinate D-fructose 6-phosphate. The active-site Proton acceptor is the Glu221. The D-fructose 6-phosphate site is built by His237 and Lys331. His237 acts as the Proton donor in catalysis. Residue Lys331 is the Proton acceptor of the active site.

It belongs to the PGI/PMI family. In terms of assembly, homodimer.

It catalyses the reaction alpha-D-glucose 6-phosphate = beta-D-fructose 6-phosphate. It carries out the reaction D-mannose 6-phosphate = D-fructose 6-phosphate. Its function is as follows. Dual specificity isomerase that catalyzes the isomerization of both glucose-6-phosphate and mannose-6-phosphate to fructose-6-phosphate. This is Bifunctional phosphoglucose/phosphomannose isomerase from Caldicellulosiruptor bescii (strain ATCC BAA-1888 / DSM 6725 / KCTC 15123 / Z-1320) (Anaerocellum thermophilum).